The primary structure comprises 430 residues: Histidine--tRNA ligase (430 aa).

This sequence belongs to the class-II aminoacyl-tRNA synthetase family. Homodimer.

The protein localises to the cytoplasm. It catalyses the reaction tRNA(His) + L-histidine + ATP = L-histidyl-tRNA(His) + AMP + diphosphate + H(+). This chain is Histidine--tRNA ligase, found in Chlamydia caviae (strain ATCC VR-813 / DSM 19441 / 03DC25 / GPIC) (Chlamydophila caviae).